The sequence spans 166 residues: Transcription antitermination protein NusB (166 aa).

Residues 1–18 (MISDESDRFNPRDPKPAD) are compositionally biased toward basic and acidic residues. Positions 1–30 (MISDESDRFNPRDPKPADAGKPSKSAKRRE) are disordered.

The protein belongs to the NusB family.

In terms of biological role, involved in transcription antitermination. Required for transcription of ribosomal RNA (rRNA) genes. Binds specifically to the boxA antiterminator sequence of the ribosomal RNA (rrn) operons. The chain is Transcription antitermination protein NusB from Pseudomonas entomophila (strain L48).